We begin with the raw amino-acid sequence, 460 residues long: Interleukin-1 receptor-associated kinase 4 (460 aa).

Met-1 carries the post-translational modification N-acetylmethionine. The region spanning 20–104 (RKLSDFIDPQ…APASLLLPDA (85 aa)) is the Death domain. Lys-34 carries the N6-acetyllysine modification. A Protein kinase domain is found at 186–454 (SVGGNKMGEG…PDIKKVQQLL (269 aa)). ATP contacts are provided by residues 192-200 (MGEGGFGVV) and Lys-213. The active-site Proton acceptor is the Asp-311. Residues 313 to 316 (KSAN) and Asp-329 contribute to the ATP site. A phosphothreonine mark is found at Thr-342 and Thr-345. Ser-346 carries the post-translational modification Phosphoserine.

This sequence belongs to the protein kinase superfamily. TKL Ser/Thr protein kinase family. Pelle subfamily. In terms of assembly, associates with MYD88 and IRAK2 to form a ternary complex called the Myddosome. Once phosphorylated, IRAK4 dissociates from the receptor complex and then associates with the TNF receptor-associated factor 6 (TRAF6), IRAK1, and PELI1; this intermediate complex is required for subsequent NF-kappa-B activation. Direct binding of SMAD6 to PELI1 prevents complex formation and hence negatively regulates IL1R-TLR signaling and eventually NF-kappa-B-mediated gene expression. Interacts with IL1RL1. Interacts (when phosphorylated) with IRAK1. May interact (when phosphorylated) with IRAK3. Requires Mg(2+) as cofactor. Post-translationally, phosphorylated.

It localises to the cytoplasm. The catalysed reaction is L-seryl-[protein] + ATP = O-phospho-L-seryl-[protein] + ADP + H(+). It catalyses the reaction L-threonyl-[protein] + ATP = O-phospho-L-threonyl-[protein] + ADP + H(+). Serine/threonine-protein kinase that plays a critical role in initiating innate immune response against foreign pathogens. Involved in Toll-like receptor (TLR) and IL-1R signaling pathways. Is rapidly recruited by MYD88 to the receptor-signaling complex upon TLR activation to form the Myddosome together with IRAK2. Phosphorylates initially IRAK1, thus stimulating the kinase activity and intensive autophosphorylation of IRAK1. Phosphorylates E3 ubiquitin ligases Pellino proteins (PELI1, PELI2 and PELI3) to promote pellino-mediated polyubiquitination of IRAK1. Then, the ubiquitin-binding domain of IKBKG/NEMO binds to polyubiquitinated IRAK1 bringing together the IRAK1-MAP3K7/TAK1-TRAF6 complex and the NEMO-IKKA-IKKB complex. In turn, MAP3K7/TAK1 activates IKKs (CHUK/IKKA and IKBKB/IKKB) leading to NF-kappa-B nuclear translocation and activation. Alternatively, phosphorylates TIRAP to promote its ubiquitination and subsequent degradation. Phosphorylates NCF1 and regulates NADPH oxidase activation after LPS stimulation suggesting a similar mechanism during microbial infections. The sequence is that of Interleukin-1 receptor-associated kinase 4 (IRAK4) from Homo sapiens (Human).